A 90-amino-acid polypeptide reads, in one-letter code: Probable Fe(2+)-trafficking protein (90 aa).

Belongs to the Fe(2+)-trafficking protein family.

Could be a mediator in iron transactions between iron acquisition and iron-requiring processes, such as synthesis and/or repair of Fe-S clusters in biosynthetic enzymes. The protein is Probable Fe(2+)-trafficking protein of Polaromonas sp. (strain JS666 / ATCC BAA-500).